The sequence spans 189 residues: GTP cyclohydrolase 1 (189 aa).

Zn(2+) is bound by residues cysteine 78, histidine 81, and cysteine 150.

It belongs to the GTP cyclohydrolase I family. As to quaternary structure, homomer.

It catalyses the reaction GTP + H2O = 7,8-dihydroneopterin 3'-triphosphate + formate + H(+). It functions in the pathway cofactor biosynthesis; 7,8-dihydroneopterin triphosphate biosynthesis; 7,8-dihydroneopterin triphosphate from GTP: step 1/1. The sequence is that of GTP cyclohydrolase 1 from Bacillus anthracis (strain A0248).